Reading from the N-terminus, the 226-residue chain is GTP-binding nuclear protein Ran (226 aa).

In terms of domain architecture, Small GTPase Ran-type spans 3–184 (DPISFKVILV…LSILRTLLND (182 aa)). 14 to 21 (DGATGKTT) is a GTP binding site. The tract at residues 33-41 (KQYISTIGV) is switch-I. GTP is bound by residues G70, 135–138 (NKCD), and 163–165 (SAK). The tract at residues 70–86 (GQEKFGGLRDGYYVDSD) is switch-II.

It belongs to the small GTPase superfamily. Ran family. As to quaternary structure, found in a nuclear export complex with RanGTP, exportin and pre-miRNA.

The protein localises to the nucleus. GTP-binding protein involved in nucleocytoplasmic transport. Required for the import of protein into the nucleus and also for RNA export. Involved in chromatin condensation and control of cell cycle. This is GTP-binding nuclear protein Ran from Giardia intestinalis (Giardia lamblia).